The chain runs to 87 residues: Small ribosomal subunit protein bS18 (87 aa).

The segment covering 1–20 has biased composition (basic and acidic residues); that stretch reads MAGKSSGDRRKPIRKGKDGK. The disordered stretch occupies residues 1–24; the sequence is MAGKSSGDRRKPIRKGKDGKNAAP.

The protein belongs to the bacterial ribosomal protein bS18 family. As to quaternary structure, part of the 30S ribosomal subunit. Forms a tight heterodimer with protein bS6.

Its function is as follows. Binds as a heterodimer with protein bS6 to the central domain of the 16S rRNA, where it helps stabilize the platform of the 30S subunit. This Leifsonia xyli subsp. xyli (strain CTCB07) protein is Small ribosomal subunit protein bS18.